Consider the following 119-residue polypeptide: Holo-[acyl-carrier-protein] synthase (119 aa).

Residues D8 and E58 each contribute to the Mg(2+) site.

This sequence belongs to the P-Pant transferase superfamily. AcpS family. It depends on Mg(2+) as a cofactor.

It is found in the cytoplasm. It carries out the reaction apo-[ACP] + CoA = holo-[ACP] + adenosine 3',5'-bisphosphate + H(+). Transfers the 4'-phosphopantetheine moiety from coenzyme A to a Ser of acyl-carrier-protein. The chain is Holo-[acyl-carrier-protein] synthase from Bacillus cereus (strain ATCC 10987 / NRS 248).